We begin with the raw amino-acid sequence, 95 residues long: MNIRPLHDRVVVRRVEEKKTTSSGLIIPDSATEKPSEGVVVAVGNGKKNDNGDTIALDVTIGNKVLFAQYAGTEIKVDGKKLLIMKEGDIVAVIK.

The protein belongs to the GroES chaperonin family. In terms of assembly, heptamer of 7 subunits arranged in a ring. Interacts with the chaperonin GroEL.

Its subcellular location is the cytoplasm. Together with the chaperonin GroEL, plays an essential role in assisting protein folding. The GroEL-GroES system forms a nano-cage that allows encapsulation of the non-native substrate proteins and provides a physical environment optimized to promote and accelerate protein folding. GroES binds to the apical surface of the GroEL ring, thereby capping the opening of the GroEL channel. The chain is Co-chaperonin GroES from Vesicomyosocius okutanii subsp. Calyptogena okutanii (strain HA).